Consider the following 160-residue polypeptide: Transcriptional regulator MraZ (160 aa).

SpoVT-AbrB domains follow at residues 5 to 50 (KFET…EGVY) and 93 to 136 (AIEC…SQAE).

It belongs to the MraZ family. Forms oligomers.

The protein resides in the cytoplasm. It is found in the nucleoid. This Geotalea uraniireducens (strain Rf4) (Geobacter uraniireducens) protein is Transcriptional regulator MraZ.